The chain runs to 199 residues: Recombination protein RecR (199 aa).

The C4-type zinc finger occupies 57–72 (CQSCRTYTEETLCPIC). A Toprim domain is found at 81 to 176 (STICVVETPA…MISRIAHGVP (96 aa)).

It belongs to the RecR family.

Its function is as follows. May play a role in DNA repair. It seems to be involved in an RecBC-independent recombinational process of DNA repair. It may act with RecF and RecO. This chain is Recombination protein RecR, found in Shewanella putrefaciens (strain CN-32 / ATCC BAA-453).